Here is a 129-residue protein sequence, read N- to C-terminus: Succinate dehydrogenase cytochrome b556 subunit (129 aa).

Over 1 to 26 (MIRNVKKQRPVNLDLQTIRFPITAIA) the chain is Cytoplasmic. A helical membrane pass occupies residues 27-52 (SILHRVSGVITFVAVGILLWLLGTSL). Topologically, residues 53–68 (SSPEGFEQASAIMGSF) are periplasmic. Residues 69 to 89 (FVKFIMWGILTALAYHVVVGI) form a helical membrane-spanning segment. Position 84 (H84) interacts with heme. Topologically, residues 90–108 (RHMMMDFGYLEETFEAGKR) are cytoplasmic. Residues 109-129 (SAKISFVITVVLSLLAGVLVW) form a helical membrane-spanning segment.

It belongs to the cytochrome b560 family. In terms of assembly, part of an enzyme complex containing four subunits: a flavoprotein, an iron-sulfur protein, plus two membrane-anchoring proteins, SdhC and SdhD. The complex can form homotrimers. Requires heme as cofactor.

The protein resides in the cell inner membrane. Its pathway is carbohydrate metabolism; tricarboxylic acid cycle. Functionally, membrane-anchoring subunit of succinate dehydrogenase (SDH). This is Succinate dehydrogenase cytochrome b556 subunit (sdhC) from Escherichia coli O157:H7.